The primary structure comprises 213 residues: Large ribosomal subunit protein uL3 (213 aa).

It belongs to the universal ribosomal protein uL3 family. Part of the 50S ribosomal subunit. Forms a cluster with proteins L14 and L19.

Its function is as follows. One of the primary rRNA binding proteins, it binds directly near the 3'-end of the 23S rRNA, where it nucleates assembly of the 50S subunit. The polypeptide is Large ribosomal subunit protein uL3 (Desulforudis audaxviator (strain MP104C)).